The chain runs to 478 residues: Probable glycine dehydrogenase (decarboxylating) subunit 2 (478 aa).

At lysine 264 the chain carries N6-(pyridoxal phosphate)lysine.

Belongs to the GcvP family. C-terminal subunit subfamily. In terms of assembly, the glycine cleavage system is composed of four proteins: P, T, L and H. In this organism, the P 'protein' is a heterodimer of two subunits. It depends on pyridoxal 5'-phosphate as a cofactor.

It catalyses the reaction N(6)-[(R)-lipoyl]-L-lysyl-[glycine-cleavage complex H protein] + glycine + H(+) = N(6)-[(R)-S(8)-aminomethyldihydrolipoyl]-L-lysyl-[glycine-cleavage complex H protein] + CO2. In terms of biological role, the glycine cleavage system catalyzes the degradation of glycine. The P protein binds the alpha-amino group of glycine through its pyridoxal phosphate cofactor; CO(2) is released and the remaining methylamine moiety is then transferred to the lipoamide cofactor of the H protein. This chain is Probable glycine dehydrogenase (decarboxylating) subunit 2, found in Endomicrobium trichonymphae.